The primary structure comprises 842 residues: Homeobox-leucine zipper protein REVOLUTA (842 aa).

The disordered stretch occupies residues 1–20 (MEMAVANHRERSSDSMNRHL). The segment covering 7 to 20 (NHRERSSDSMNRHL) has biased composition (basic and acidic residues). Residues 22-85 (SSGKYVRYTA…NRRCRDKQRK (64 aa)) constitute a DNA-binding region (homeobox). The stretch at 90–121 (LQSVNRKLSAMNKLLMEENDRLQKQVSQLVCE) forms a coiled coil. One can recognise an START domain in the interval 151-379 (DANSPAGLLS…LAQESNGEVV (229 aa)).

The protein belongs to the HD-ZIP homeobox family. Class III subfamily. As to quaternary structure, homodimer. Heterodimer with ZPR1, ZPR2, ZPR3 or ZPR4. Interacts with ESR1 and ESR2. Interacts with ZPR1, ZPR2, ZPR3 and ZPR4. Heterodimerization with ZPR3 prevents DNA binding by REV. In terms of tissue distribution, expressed in the interfascicular regions of stem and vascular bundles of young roots and leaves.

The protein localises to the nucleus. Functionally, probable transcription factor involved in the regulation of interfascicular fiber (cortical cells) and secondary xylem differentiation in the inflorescence stems. Required for lateral shoot meristems (LSMs) and flower meristems (FMs) initiation. May be involved in the determination of vascular patterning and organ polarity. Directly regulates the expression of AGO10, ZPR1, ZPR2, ZPR3 and ZPR4. Required to regulate adaxial-abaxial polarity and leaf axial patterning. The polypeptide is Homeobox-leucine zipper protein REVOLUTA (Arabidopsis thaliana (Mouse-ear cress)).